The chain runs to 127 residues: Aspartate 1-decarboxylase (127 aa).

Ser-25 acts as the Schiff-base intermediate with substrate; via pyruvic acid in catalysis. Ser-25 carries the post-translational modification Pyruvic acid (Ser). Thr-57 contacts substrate. Tyr-58 acts as the Proton donor in catalysis. Substrate is bound at residue 73–75 (GAA).

Belongs to the PanD family. As to quaternary structure, heterooctamer of four alpha and four beta subunits. Pyruvate serves as cofactor. Post-translationally, is synthesized initially as an inactive proenzyme, which is activated by self-cleavage at a specific serine bond to produce a beta-subunit with a hydroxyl group at its C-terminus and an alpha-subunit with a pyruvoyl group at its N-terminus.

It is found in the cytoplasm. The enzyme catalyses L-aspartate + H(+) = beta-alanine + CO2. Its pathway is cofactor biosynthesis; (R)-pantothenate biosynthesis; beta-alanine from L-aspartate: step 1/1. Catalyzes the pyruvoyl-dependent decarboxylation of aspartate to produce beta-alanine. The protein is Aspartate 1-decarboxylase of Vesicomyosocius okutanii subsp. Calyptogena okutanii (strain HA).